We begin with the raw amino-acid sequence, 56 residues long: UPF0391 membrane protein Noc_0484 (56 aa).

2 helical membrane passes run 6–26 and 29–49; these read VTFL…IAGI and EIAW…LVLG.

Belongs to the UPF0391 family.

It localises to the cell membrane. The protein is UPF0391 membrane protein Noc_0484 of Nitrosococcus oceani (strain ATCC 19707 / BCRC 17464 / JCM 30415 / NCIMB 11848 / C-107).